The primary structure comprises 101 residues: Helix-loop-helix protein 17 (101 aa).

Residues 14-27 (GVRLSINLRERCRM) are basic motif. Residues 14 to 68 (GVRLSINLRERCRMHDLNEALDDLRAVIPYAHGGSVRKLSKIATLLLAKNHIIMQ) form the bHLH domain. The segment at 28–68 (HDLNEALDDLRAVIPYAHGGSVRKLSKIATLLLAKNHIIMQ) is helix-loop-helix motif.

Expressed in neuronal tissues of the head, including sheath cells of the cephalic sensilla (CEPsh) glia.

Its subcellular location is the nucleus. Probable transcription factor that regulates the expression of dopamine receptors dop-1, dop-2 and dop-3 and thus dopamine-dependent behaviors. May act redundantly with hlh-31 and hlh-32 to regulate ventral CEPsh glia functions. May play a role in chemotactic responses in larvae. The protein is Helix-loop-helix protein 17 of Caenorhabditis elegans.